The following is a 600-amino-acid chain: MDEVKEFTSKQFFYTLLTLPSTLKLIFQLEKRYAIYLIVLNAITAFVPLASLFIYQDLINSVLGSGRHLINIIIIYFIVQVITTVLGQLESYVSGKFDMRLSYSINMRLMRTTSSLELSDYEQADMYNIIEKVTQDSTYKPFQLFNAIIVELSSFISLLSSLFFIGTWNIGVAILLLIVPVLSLVLFLRVGQLEFLIQWQRASSERETWYIVYLLTHDFSFKEIKLNNISNYFIHKFGKLKKGFINQDLAIARKKTYFNIFLDFILNLINILTIFAMILSVRAGKLLIGNLVSLIQAISKINTYSQTMIQNIYIIYNTSLFMEQLFEFLKRESVVHKKIEDTEICNQHIGTVKVINLSYVYPNSNAFALKNINLSFEKGELTAIVGKNGSGKSTLVKIISGLYQPTMGIIQYDKMRSSLMPEEFYQKNISVLFQDFVKYELTIRENIGLSDLSSQWEDEKIIKVLDNLGLDFLKTNNQYVLDTQLGNWFQEGHQLSGGQWQKIALARTFFKKASIYILDEPSAALDPVAEKEIFDYFVALSENNISIFISHSLNAARKANKIVVMKDGQVEDVGSHDVLLRRCQYYQELYYSEQYEDNDE.

5 helical membrane passes run 34–54 (AIYL…SLFI), 69–89 (LINI…LGQL), 147–167 (AIIV…FIGT), 168–188 (WNIG…VLFL), and 260–280 (IFLD…MILS). One can recognise an ABC transmembrane type-1 domain in the interval 34-317 (AIYLIVLNAI…MIQNIYIIYN (284 aa)). The region spanning 352 to 592 (VKVINLSYVY…CQYYQELYYS (241 aa)) is the ABC transporter domain. ATP is bound at residue 386-393 (GKNGSGKS).

It belongs to the ABC transporter superfamily. Nisin exporter (TC 3.A.1.111.3) family.

It is found in the cell membrane. In terms of biological role, probably implicated in the export process of the lantibiotic nisin. This Lactococcus lactis subsp. lactis (Streptococcus lactis) protein is Nisin transport ATP-binding protein NisT (nisT).